The following is a 215-amino-acid chain: Large ribosomal subunit protein uL3 (215 aa).

The interval G136–K161 is disordered. Position 151 is an N5-methylglutamine (Q151).

The protein belongs to the universal ribosomal protein uL3 family. As to quaternary structure, part of the 50S ribosomal subunit. Forms a cluster with proteins L14 and L19. Methylated by PrmB.

In terms of biological role, one of the primary rRNA binding proteins, it binds directly near the 3'-end of the 23S rRNA, where it nucleates assembly of the 50S subunit. The protein is Large ribosomal subunit protein uL3 of Rickettsia akari (strain Hartford).